The chain runs to 57 residues: UPF0391 membrane protein RPA3505 (57 aa).

Transmembrane regions (helical) follow at residues 4–24 (WVVTFLVVALIAGLLGFGGIA) and 30–50 (IAKIIFFIAIVLFLVSAVISI).

Belongs to the UPF0391 family.

Its subcellular location is the cell membrane. This is UPF0391 membrane protein RPA3505 from Rhodopseudomonas palustris (strain ATCC BAA-98 / CGA009).